A 490-amino-acid chain; its full sequence is Bifunctional protein HldE (490 aa).

The ribokinase stretch occupies residues 1–330 (MLDFEAVLPA…RKVLPPASLA (330 aa)). 205-208 (NRKE) is an ATP binding site. Residue Asp275 is part of the active site. The interval 358 to 490 (FTNGCFDILH…LVARAQNGKA (133 aa)) is cytidylyltransferase.

In the N-terminal section; belongs to the carbohydrate kinase PfkB family. The protein in the C-terminal section; belongs to the cytidylyltransferase family. Homodimer.

The enzyme catalyses D-glycero-beta-D-manno-heptose 7-phosphate + ATP = D-glycero-beta-D-manno-heptose 1,7-bisphosphate + ADP + H(+). It carries out the reaction D-glycero-beta-D-manno-heptose 1-phosphate + ATP + H(+) = ADP-D-glycero-beta-D-manno-heptose + diphosphate. It participates in nucleotide-sugar biosynthesis; ADP-L-glycero-beta-D-manno-heptose biosynthesis; ADP-L-glycero-beta-D-manno-heptose from D-glycero-beta-D-manno-heptose 7-phosphate: step 1/4. Its pathway is nucleotide-sugar biosynthesis; ADP-L-glycero-beta-D-manno-heptose biosynthesis; ADP-L-glycero-beta-D-manno-heptose from D-glycero-beta-D-manno-heptose 7-phosphate: step 3/4. Its function is as follows. Catalyzes the phosphorylation of D-glycero-D-manno-heptose 7-phosphate at the C-1 position to selectively form D-glycero-beta-D-manno-heptose-1,7-bisphosphate. In terms of biological role, catalyzes the ADP transfer from ATP to D-glycero-beta-D-manno-heptose 1-phosphate, yielding ADP-D-glycero-beta-D-manno-heptose. The protein is Bifunctional protein HldE of Rhodopseudomonas palustris (strain BisB18).